Reading from the N-terminus, the 438-residue chain is UDP-glycosyltransferase 84B2 (438 aa).

Residues Ser260, 314 to 316 (GQQ), 331 to 339 (HCGWNSTIE), and 353 to 356 (WIDQ) contribute to the UDP-alpha-D-glucose site.

The protein belongs to the UDP-glycosyltransferase family.

The chain is UDP-glycosyltransferase 84B2 (UGT84B2) from Arabidopsis thaliana (Mouse-ear cress).